Here is a 648-residue protein sequence, read N- to C-terminus: Transmembrane 9 superfamily member 8 (648 aa).

Positions 1-33 (MAMEFLRSSRRILESSGCAIALIFLLFIHGAHS) are cleaved as a signal peptide. The Lumenal portion of the chain corresponds to 34-285 (FYLPGVAPQD…YLLMSDNQIH (252 aa)). Residues 286-306 (WFSIVNSLMIVLFLSGMVAMI) form a helical membrane-spanning segment. Over 307–355 (MLRTLYRDISRYNELETQEEAQEETGWKLVHGDVFRLPTNSDLLCVYVG) the chain is Cytoplasmic. A helical membrane pass occupies residues 356–376 (TGVQCLGMVFVTMIFAMLGFL). Over 377-381 (SPSNR) the chain is Lumenal. The chain crosses the membrane as a helical span at residues 382 to 402 (GGLMTAMLLLWVFMGLFAGYA). Residues 403-422 (SSRLYKMFKGTEWKRIAFRT) are Cytoplasmic-facing. A helical transmembrane segment spans residues 423–443 (AFLFPAVVSAIFFVLNALIWG). The Lumenal portion of the chain corresponds to 444–455 (QKSSGAVPFGTM). A helical transmembrane segment spans residues 456 to 476 (FALIFLWFGISVPLVFVGGYI). The Cytoplasmic portion of the chain corresponds to 477-506 (GFKKPAADDPVKTNKIPRQIPEQAWYMNPV). A helical transmembrane segment spans residues 507 to 527 (FSILIGGILPFGAVFIELFFI). Residues 528–538 (LTSIWLNQFYY) lie on the Lumenal side of the membrane. Residues 539–559 (IFGFLFLVFVILIVTCAEITV) traverse the membrane as a helical segment. The Cytoplasmic segment spans residues 560 to 577 (VLCYFQLCSEDYLWWWRS). Residues 578–598 (YLTSGSSALYLFLYATFYFFT) traverse the membrane as a helical segment. The Lumenal segment spans residues 599-604 (KLQITK). The chain crosses the membrane as a helical span at residues 605-625 (LVSAMLYFGYMLIASYAFFVL). The Cytoplasmic portion of the chain corresponds to 626 to 648 (TGTIGFYACLWFTRLIYSSVKID). The short motif at 637–642 (FTRLIY) is the Endoplasmic reticulum export signal element. The short motif at 646 to 648 (KID) is the Golgi retention signal element.

The protein belongs to the nonaspanin (TM9SF) (TC 9.A.2) family.

It localises to the endosome membrane. The protein localises to the golgi apparatus membrane. In Arabidopsis thaliana (Mouse-ear cress), this protein is Transmembrane 9 superfamily member 8.